A 328-amino-acid chain; its full sequence is Interferon regulatory factor 1 (328 aa).

A DNA-binding region (IRF tryptophan pentad repeat) is located at residues 5–113 (RMRMRPWLEM…SAVRVYRMLP (109 aa)). Lysine 78 bears the N6-acetyllysine mark. Residues 92–164 (EEVKDQSRNK…STLPDDHSSY (73 aa)) are disordered. Residues 141–157 (GDSSPDTLSDGLSSSTL) are compositionally biased toward low complexity. Glycyl lysine isopeptide (Lys-Gly) (interchain with G-Cter in SUMO) cross-links involve residues lysine 276 and lysine 300.

This sequence belongs to the IRF family. Monomer. Homodimer. Interacts with EP300. Interacts with MYD88. Interacts with PIAS3. Interacts with SPOP. In terms of processing, phosphorylated by CK2 and this positively regulates its activity. Post-translationally, sumoylation represses the transcriptional activity and displays enhanced resistance to protein degradation. Sumoylated by UBE2I/UBC9 and SUMO1. Inactivates the tumor suppressor activity. Elevated levels in tumor cells. Major site is Lys-276. Sumoylation is enhanced by PIAS3. Desumoylated by SENP1 in tumor cells and appears to compete with ubiquitination on C-terminal sites. Ubiquitinated in a SPOP-depedent manner. Appears to compete with sumoylation on C-terminal sites.

Its subcellular location is the nucleus. The protein localises to the cytoplasm. Its activity is regulated as follows. Activated by MYD88. In terms of biological role, transcriptional regulator which displays a remarkable functional diversity in the regulation of cellular responses. Regulates transcription of IFN and IFN-inducible genes, host response to viral and bacterial infections, regulation of many genes expressed during hematopoiesis, inflammation, immune responses and cell proliferation and differentiation, regulation of the cell cycle and induction of growth arrest and programmed cell death following DNA damage. Stimulates both innate and acquired immune responses through the activation of specific target genes and can act as a transcriptional activator and repressor regulating target genes by binding to an interferon-stimulated response element (ISRE) in their promoters. Has an essentail role in IFNG-dependent immunity to mycobacteria. Binds to a consensus sequence in gene promoters. Its target genes for transcriptional activation activity include: genes involved in anti-viral response, such as IFN-alpha/beta, RIGI, TNFSF10/TRAIL, ZBP1, OAS1/2, PIAS1/GBP, EIF2AK2/PKR and RSAD2/viperin; antibacterial response, such as GBP2, GBP5 and NOS2/INOS; anti-proliferative response, such as p53/TP53, LOX and CDKN1A; apoptosis, such as BBC3/PUMA, CASP1, CASP7 and CASP8; immune response, such as IL7, IL12A/B and IL15, PTGS2/COX2 and CYBB; DNA damage responses and DNA repair, such as POLQ/POLH; MHC class I expression, such as TAP1, PSMB9/LMP2, PSME1/PA28A, PSME2/PA28B and B2M and MHC class II expression, such as CIITA; metabolic enzymes, such as ACOD1/IRG1. Represses genes involved in anti-proliferative response, such as BIRC5/survivin, CCNB1, CCNE1, CDK1, CDK2 and CDK4 and in immune response, such as FOXP3, IL4, ANXA2 and TLR4. Stimulates p53/TP53-dependent transcription through enhanced recruitment of EP300 leading to increased acetylation of p53/TP53. Plays an important role in immune response directly affecting NK maturation and activity, macrophage production of IL12, Th1 development and maturation of CD8+ T-cells. Also implicated in the differentiation and maturation of dendritic cells and in the suppression of regulatory T (Treg) cells development. Acts as a tumor suppressor and plays a role not only in antagonism of tumor cell growth but also in stimulating an immune response against tumor cells. The polypeptide is Interferon regulatory factor 1 (Irf1) (Rattus norvegicus (Rat)).